The primary structure comprises 491 residues: Chondroitin proteoglycan 2 (491 aa).

The signal sequence occupies residues 1 to 18 (MKTIVALGLLALATAASG). In terms of domain architecture, Chitin-binding type-2 1 spans 21 to 78 (LQDCTNALDGLYAIGNCESQFLTCSGGIARIMDCPADLIYNEPLLICDWRHNVVGCEG). Cys54 and Cys67 form a disulfide bridge. The disordered stretch occupies residues 80 to 126 (GEASGEQSGEGSGEASGEGSGEASGEGSGEASGEGSGSGEGSGEENN). Over residues 87 to 120 (SGEGSGEASGEGSGEASGEGSGEASGEGSGSGEG) the composition is skewed to gly residues. The 58-residue stretch at 125-182 (NNVCEGLEDGAYSSGGCTTYYFFCTDNTARFLSCPTPLFYDVATQKCAWKALVEECNG) folds into the Chitin-binding type-2 2 domain. An intrachain disulfide couples Cys158 to Cys171. The interval 187–217 (DGSGETSGEGSGEASGENSGENSGEGSGEFE) is disordered. Residues Ser197 and Ser201 are each glycosylated (O-linked (Xyl...) (chondroitin sulfate) serine). Positions 200 to 210 (ASGENSGENSG) are enriched in low complexity. Chitin-binding type-2 domains lie at 217 to 274 (EPTC…ECHG), 279 to 334 (APVC…ECQE), 367 to 423 (ENEC…KCLI), and 436 to 491 (PFDC…LQCH). 2 cysteine pairs are disulfide-bonded: Cys250/Cys263 and Cys310/Cys323. Residues 336-367 (SGEESSGEASGEQSGEGSGEASGEASGEASGE) form a disordered region. The segment covering 356–367 (ASGEASGEASGE) has biased composition (low complexity). Cysteines 399 and 412 form a disulfide. Residue Asn464 is glycosylated (N-linked (GlcNAc...) asparagine). A disulfide bridge connects residues Cys467 and Cys481.

Functionally, required for polar body extrusion during cytokinesis in embryo development. Affects cortical granule size. Shown to have roles in meiotic chromosome segregation, osmotic barrier function and polarization in conjunction with cpg-2. Binds chitin. In Caenorhabditis briggsae, this protein is Chondroitin proteoglycan 2.